We begin with the raw amino-acid sequence, 282 residues long: Biotin synthase (282 aa).

Residues 1 to 228 (MQEIFLCSIS…NARLMVAGGR (228 aa)) enclose the Radical SAM core domain. Cys17, Cys21, and Cys24 together coordinate [4Fe-4S] cluster. Residues Cys61, Cys96, Cys154, and Arg221 each coordinate [2Fe-2S] cluster.

This sequence belongs to the radical SAM superfamily. Biotin synthase family. As to quaternary structure, homodimer. Requires [4Fe-4S] cluster as cofactor. It depends on [2Fe-2S] cluster as a cofactor.

The enzyme catalyses (4R,5S)-dethiobiotin + (sulfur carrier)-SH + 2 reduced [2Fe-2S]-[ferredoxin] + 2 S-adenosyl-L-methionine = (sulfur carrier)-H + biotin + 2 5'-deoxyadenosine + 2 L-methionine + 2 oxidized [2Fe-2S]-[ferredoxin]. It functions in the pathway cofactor biosynthesis; biotin biosynthesis; biotin from 7,8-diaminononanoate: step 2/2. In terms of biological role, catalyzes the conversion of dethiobiotin (DTB) to biotin by the insertion of a sulfur atom into dethiobiotin via a radical-based mechanism. The chain is Biotin synthase from Helicobacter pylori (strain G27).